Reading from the N-terminus, the 443-residue chain is MFIFVVGLNHKSAPVEVREKLSFTEAQLSEALHKLQGMAGIEGCCILSTCNRTEIYGASTDMEKGMTAVKRFVLEWGQLQPQDFSKYFYVHTLYDAIRHLFRVASGLDSMVLGETQILGQVRTAYQRSCNEDCSNGIVNTWFQQAITVGKRVRTETGIDQHPVSISYTAVELAEQVLGGLKGRTAMVLGAGKMSVLTLKHLVAEGVDKIIIANRSVEKAEELAKSCGGEAISFADVNHRLEEADILISCTAATHYVIRKSMVEQVMDRRGGKPVFFFDIAVPRDIDPEVAQVPGTHLYDIDAMQHVIDRNLAERRKCAAEAEIIIEHEINQFMRWLNSLFVIPTIVGLKNKGNQIKEKELDRALCKLKHLSEKEKKLVGSLASSIVNQLLHDPITQLRHYAASPEGHLYSEILQNLFCLDVPGQRQKHVVVHYPAVEQRQNRA.

Substrate-binding positions include 49–52, Ser109, 114–116, and Gln120; these read TCNR and ETQ. Cys50 (nucleophile) is an active-site residue. 189–194 contacts NADP(+); that stretch reads GAGKMS.

The protein belongs to the glutamyl-tRNA reductase family. As to quaternary structure, homodimer.

It carries out the reaction (S)-4-amino-5-oxopentanoate + tRNA(Glu) + NADP(+) = L-glutamyl-tRNA(Glu) + NADPH + H(+). Its pathway is porphyrin-containing compound metabolism; protoporphyrin-IX biosynthesis; 5-aminolevulinate from L-glutamyl-tRNA(Glu): step 1/2. Catalyzes the NADPH-dependent reduction of glutamyl-tRNA(Glu) to glutamate 1-semialdehyde (GSA). In Heliobacterium mobile (Heliobacillus mobilis), this protein is Glutamyl-tRNA reductase.